Here is a 427-residue protein sequence, read N- to C-terminus: Glutamate-1-semialdehyde 2,1-aminomutase (427 aa).

Lys265 is modified (N6-(pyridoxal phosphate)lysine).

This sequence belongs to the class-III pyridoxal-phosphate-dependent aminotransferase family. HemL subfamily. Homodimer. The cofactor is pyridoxal 5'-phosphate.

Its subcellular location is the cytoplasm. The enzyme catalyses (S)-4-amino-5-oxopentanoate = 5-aminolevulinate. Its pathway is porphyrin-containing compound metabolism; protoporphyrin-IX biosynthesis; 5-aminolevulinate from L-glutamyl-tRNA(Glu): step 2/2. The sequence is that of Glutamate-1-semialdehyde 2,1-aminomutase from Teredinibacter turnerae (strain ATCC 39867 / T7901).